The chain runs to 639 residues: Nitrous-oxide reductase (639 aa).

The segment at residues 1 to 54 (MSDKKDQVPGAVEAPRGVSRRSFLGTGAVTGAVLAGATALGAGTFTRESWAAAA) is a signal peptide (tat-type signal). Positions 130, 131, and 179 each coordinate Cu cation. Tyr-257, Glu-260, Met-268, Asp-274, and Asn-325 together coordinate Ca(2+). Cu cation contacts are provided by His-327, His-383, and His-434. Ca(2+) is bound by residues Lys-455 and Glu-470. 7 residues coordinate Cu cation: His-495, His-584, Cys-619, Trp-621, Cys-623, His-627, and Met-630. The COX2-like stretch occupies residues 543-639 (NKVRVYMTSM…MVGRMLVEKA (97 aa)).

It belongs to the NosZ family. The protein in the C-terminal section; belongs to the cytochrome c oxidase subunit 2 family. Homodimer. Ca(2+) serves as cofactor. It depends on Cu cation as a cofactor. In terms of processing, predicted to be exported by the Tat system. The position of the signal peptide cleavage has not been experimentally proven.

It is found in the periplasm. The catalysed reaction is N2 + 2 Fe(III)-[cytochrome c] + H2O = nitrous oxide + 2 Fe(II)-[cytochrome c] + 2 H(+). It functions in the pathway nitrogen metabolism; nitrate reduction (denitrification); dinitrogen from nitrate: step 4/4. In terms of biological role, nitrous-oxide reductase is part of a bacterial respiratory system which is activated under anaerobic conditions in the presence of nitrate or nitrous oxide. This Pseudomonas fluorescens protein is Nitrous-oxide reductase (nosZ).